A 657-amino-acid polypeptide reads, in one-letter code: Glycogen debranching enzyme (657 aa).

The active-site Nucleophile is Asp336. The active-site Proton donor is Glu371. Basic and acidic residues predominate over residues 458–467 (NEANGEENRD). Positions 458–479 (NEANGEENRDGTNNNYSNNHGK) are disordered.

This sequence belongs to the glycosyl hydrolase 13 family.

It catalyses the reaction Hydrolysis of (1-&gt;6)-alpha-D-glucosidic linkages to branches with degrees of polymerization of three or four glucose residues in limit dextrin.. It functions in the pathway glycan degradation; glycogen degradation. Its function is as follows. Removes maltotriose and maltotetraose chains that are attached by 1,6-alpha-linkage to the limit dextrin main chain, generating a debranched limit dextrin. The chain is Glycogen debranching enzyme from Escherichia coli O139:H28 (strain E24377A / ETEC).